Here is a 244-residue protein sequence, read N- to C-terminus: Probable transcriptional regulatory protein CHY_1525 (244 aa).

It belongs to the TACO1 family.

It localises to the cytoplasm. In Carboxydothermus hydrogenoformans (strain ATCC BAA-161 / DSM 6008 / Z-2901), this protein is Probable transcriptional regulatory protein CHY_1525.